A 614-amino-acid polypeptide reads, in one-letter code: Acetyl-coenzyme A carboxylase carboxyl transferase subunits beta/alpha (614 aa).

An acetyl-coenzyme A carboxylase carboxyl transferase subunit beta region spans residues 1 to 250; sequence MTASATRQRP…QTAEFLLEHG (250 aa). The CoA carboxyltransferase N-terminal domain occupies 18-287; it reads EWLVCDGCRR…TAPVTPGDGH (270 aa). Residues 18-556 form a carboxyltransferase region; sequence EWLVCDGCRR…RAALTGALAE (539 aa). Residues cysteine 22, cysteine 25, cysteine 41, and cysteine 44 each coordinate Zn(2+). Residues 22–44 form a C4-type zinc finger; sequence CDGCRRMIYGRRFARGGHVCPEC. Residues 251-614 form an acetyl-coenzyme A carboxylase carboxyl transferase subunit alpha region; the sequence is VVDLISPRGQ…ADLDDARRAS (364 aa). Disordered stretches follow at residues 272–314 and 577–614; these read ATRR…DPAR and GTPA…RRAS. Over residues 297 to 307 the composition is skewed to gly residues; sequence DSRGASHGGDG. Residues 311–556 form the CoA carboxyltransferase C-terminal domain; that stretch reads DPARLADRHP…RAALTGALAE (246 aa). Low complexity predominate over residues 579 to 602; the sequence is PAPAGGAAPAPVVPAARPPLGAGR. The segment covering 603–614 has biased composition (basic and acidic residues); that stretch reads THADLDDARRAS.

This sequence in the N-terminal section; belongs to the AccD/PCCB family. It in the C-terminal section; belongs to the AccA family. Acetyl-CoA carboxylase is a heterotetramer composed of biotin carboxyl carrier protein (AccB), biotin carboxylase (AccC) and two subunits of ACCase subunit beta/alpha. It depends on Zn(2+) as a cofactor.

It is found in the cytoplasm. It carries out the reaction N(6)-carboxybiotinyl-L-lysyl-[protein] + acetyl-CoA = N(6)-biotinyl-L-lysyl-[protein] + malonyl-CoA. It functions in the pathway lipid metabolism; malonyl-CoA biosynthesis; malonyl-CoA from acetyl-CoA: step 1/1. Its function is as follows. Component of the acetyl coenzyme A carboxylase (ACC) complex. Biotin carboxylase (BC) catalyzes the carboxylation of biotin on its carrier protein (BCCP) and then the CO(2) group is transferred by the transcarboxylase to acetyl-CoA to form malonyl-CoA. This Parafrankia sp. (strain EAN1pec) protein is Acetyl-coenzyme A carboxylase carboxyl transferase subunits beta/alpha (accD).